The primary structure comprises 243 residues: Phosphoribosylaminoimidazole-succinocarboxamide synthase (243 aa).

Belongs to the SAICAR synthetase family.

The catalysed reaction is 5-amino-1-(5-phospho-D-ribosyl)imidazole-4-carboxylate + L-aspartate + ATP = (2S)-2-[5-amino-1-(5-phospho-beta-D-ribosyl)imidazole-4-carboxamido]succinate + ADP + phosphate + 2 H(+). The protein operates within purine metabolism; IMP biosynthesis via de novo pathway; 5-amino-1-(5-phospho-D-ribosyl)imidazole-4-carboxamide from 5-amino-1-(5-phospho-D-ribosyl)imidazole-4-carboxylate: step 1/2. The protein is Phosphoribosylaminoimidazole-succinocarboxamide synthase of Prochlorococcus marinus (strain MIT 9211).